Consider the following 190-residue polypeptide: UPF0200 protein TGAM_0868 (190 aa).

7–14 (GMPGSGKS) is an ATP binding site.

This sequence belongs to the UPF0200 family.

This Thermococcus gammatolerans (strain DSM 15229 / JCM 11827 / EJ3) protein is UPF0200 protein TGAM_0868.